Reading from the N-terminus, the 384-residue chain is Magnesium transporter MRS2-I (384 aa).

2 helical membrane passes run 319 to 339 (LFLS…GIFG) and 356 to 376 (WVVL…VAYA). Positions 339–341 (GMN) match the Required for magnesium transport activity motif.

It belongs to the CorA metal ion transporter (MIT) (TC 1.A.35.5) family.

Its subcellular location is the membrane. Its function is as follows. Magnesium transporter that may mediate the influx of magnesium. In Oryza sativa subsp. japonica (Rice), this protein is Magnesium transporter MRS2-I (MRS2-I).